The primary structure comprises 248 residues: Tryptophan synthase alpha chain (248 aa).

Residues glutamate 36 and aspartate 47 each act as proton acceptor in the active site.

It belongs to the TrpA family. In terms of assembly, tetramer of two alpha and two beta chains.

The enzyme catalyses (1S,2R)-1-C-(indol-3-yl)glycerol 3-phosphate + L-serine = D-glyceraldehyde 3-phosphate + L-tryptophan + H2O. It functions in the pathway amino-acid biosynthesis; L-tryptophan biosynthesis; L-tryptophan from chorismate: step 5/5. Functionally, the alpha subunit is responsible for the aldol cleavage of indoleglycerol phosphate to indole and glyceraldehyde 3-phosphate. In Archaeoglobus fulgidus (strain ATCC 49558 / DSM 4304 / JCM 9628 / NBRC 100126 / VC-16), this protein is Tryptophan synthase alpha chain.